We begin with the raw amino-acid sequence, 214 residues long: Ras-related protein Rab-11A (214 aa).

GTP-binding positions include Gly20 to Asn28, Ser39 to Thr45, Asp68 to Gln72, Asn126 to Asp129, and Ser156 to Leu158. Residues Thr42–Phe50 carry the Effector region motif. 2 S-geranylgeranyl cysteine lipidation sites follow: Cys213 and Cys214.

This sequence belongs to the small GTPase superfamily. Rab family.

The protein resides in the contractile vacuole membrane. In terms of biological role, required for normal contractile vacuole structure and function. Cells expressing a dominant negative rab11A exhibit a more extensive contractile vacuole network and enlarged contractile vacuole bladders. These cells exhibit a functional defect in osmotic regulation where cells immersed in water become rounded and detach from the surface, and contain swollen contractile vacuoles. In Dictyostelium discoideum (Social amoeba), this protein is Ras-related protein Rab-11A (rab11A).